Reading from the N-terminus, the 432-residue chain is Transcobalamin-2 (432 aa).

Positions 1 to 18 (MGHLGALLFLLGGLGALA) are cleaved as a signal peptide. 3 cysteine pairs are disulfide-bonded: Cys21–Cys270, Cys116–Cys312, and Cys165–Cys208. A glycan (N-linked (GlcNAc...) asparagine) is linked at Asn94. Residues Gln104, 152–156 (TSYYQ), His193, 193–197 (HVSVD), Asn245, Ser248, Gln294, and 400–402 (WQV) each bind cob(II)alamin.

Belongs to the eukaryotic cobalamin transport proteins family. Interacts with CD320 (via LDL-receptor class A domains). In terms of tissue distribution, expressed in mammary gland, kidney, lymphatic nodes and liver.

Its subcellular location is the secreted. Functionally, primary vitamin B12-binding and transport protein. Delivers cobalamin to cells. In Bos taurus (Bovine), this protein is Transcobalamin-2 (TCN2).